We begin with the raw amino-acid sequence, 525 residues long: GMP synthase [glutamine-hydrolyzing] (525 aa).

One can recognise a Glutamine amidotransferase type-1 domain in the interval 9–207; the sequence is RILILDFGSQ…VLDICQCEAL (199 aa). Catalysis depends on cysteine 86, which acts as the Nucleophile. Active-site residues include histidine 181 and glutamate 183. The GMPS ATP-PPase domain maps to 208–400; sequence WTPATIIEDA…LGLPYDMLFR (193 aa). 235–241 is a binding site for ATP; sequence SGGVDSS.

In terms of assembly, homodimer.

It catalyses the reaction XMP + L-glutamine + ATP + H2O = GMP + L-glutamate + AMP + diphosphate + 2 H(+). Its pathway is purine metabolism; GMP biosynthesis; GMP from XMP (L-Gln route): step 1/1. Its function is as follows. Catalyzes the synthesis of GMP from XMP. This Serratia proteamaculans (strain 568) protein is GMP synthase [glutamine-hydrolyzing].